The primary structure comprises 482 residues: tRNA sulfurtransferase (482 aa).

A THUMP domain is found at 61-165; it reads AAIVAELTRI…DERLILVTAR (105 aa). ATP-binding positions include 183-184, K265, G287, and Q296; that span reads LI. Cysteines 344 and 456 form a disulfide. In terms of domain architecture, Rhodanese spans 404–482; that stretch reads FSHNDVILDI…GFKNVKVYRP (79 aa). C456 functions as the Cysteine persulfide intermediate in the catalytic mechanism.

It belongs to the ThiI family.

The protein resides in the cytoplasm. It carries out the reaction [ThiI sulfur-carrier protein]-S-sulfanyl-L-cysteine + a uridine in tRNA + 2 reduced [2Fe-2S]-[ferredoxin] + ATP + H(+) = [ThiI sulfur-carrier protein]-L-cysteine + a 4-thiouridine in tRNA + 2 oxidized [2Fe-2S]-[ferredoxin] + AMP + diphosphate. The catalysed reaction is [ThiS sulfur-carrier protein]-C-terminal Gly-Gly-AMP + S-sulfanyl-L-cysteinyl-[cysteine desulfurase] + AH2 = [ThiS sulfur-carrier protein]-C-terminal-Gly-aminoethanethioate + L-cysteinyl-[cysteine desulfurase] + A + AMP + 2 H(+). It participates in cofactor biosynthesis; thiamine diphosphate biosynthesis. Functionally, catalyzes the ATP-dependent transfer of a sulfur to tRNA to produce 4-thiouridine in position 8 of tRNAs, which functions as a near-UV photosensor. Also catalyzes the transfer of sulfur to the sulfur carrier protein ThiS, forming ThiS-thiocarboxylate. This is a step in the synthesis of thiazole, in the thiamine biosynthesis pathway. The sulfur is donated as persulfide by IscS. The chain is tRNA sulfurtransferase from Erwinia tasmaniensis (strain DSM 17950 / CFBP 7177 / CIP 109463 / NCPPB 4357 / Et1/99).